Here is an 80-residue protein sequence, read N- to C-terminus: Metallothionein-like protein type 2 (80 aa).

It belongs to the metallothionein superfamily. Type 15 family.

In terms of biological role, metallothioneins have a high content of cysteine residues that bind various heavy metals. This chain is Metallothionein-like protein type 2 (MTI), found in Ricinus communis (Castor bean).